Consider the following 1290-residue polypeptide: MEIQQTHRKINRPLVSLALVGALVSITPQQSHAAFFTTVIIPAIVGGIATGAAVGTVSGLLGWGLKQAEEANKTPDKPDKVWRIQAGKGFNEFPNKEYDLYRSLLSSKIDGGWDWGNAATHYWVKGGQWNKLEVDMKDAVGTYNLSGLRNFTGGDLDVNMQKATLRLGQFNGNSFTSYKDSADRTTRVDFNAKNILIDNFLEINNRVGSGAGRKASSTVLTLQASEGITSSKNAEISLYDGATLNLASNSVKLMGNVWMGRLQYVGAYLAPSYSTINTSKVTGEVNFNHLTVGDHNAAQAGIIASNKTHIGTLDLWQSAGLNIIAPPEGGYKDKPKDKPSNTTQNNANNNQQNSAQNNSNTQVINPPNSAQKTEIQPTQVIDGPFAGGKDTVVNIDRINTNADGTIKVGGYKASLTTNAAHLHIGKGGINLSNQASGRTLLVENLTGNITVDGPLRVNNQVGGYALAGSSANFEFKAGTDTKNGTATFNNDISLGRFVNLKVDAHTANFKGIDTGNGGFNTLDFSGVTGKVNINKLITASTNVAVKNFNINELVVKTNGVSVGEYTHFSEDIGSQSRINTVRLETGTRSIFSGGVKFKSGEKLVIDEFYYSPWNYFDARNIKNVEITRKFASSTPENPWGTSKLMFNNLTLGQNAVMDYSQFSNLTIQGDFINNQGTINYLVRGGQVATLNVGNAAAMFFSNNVDSATGFYQPLMKINSAQDLIKNKEHVLLKAKIIGYGNVSLGTNSISNVNLIEQFKERLALYNNNNRMDICVVRNTDDIKACGTAIGNQSMVNNPDNYKYLIGKAWKNIGISKTANGSKISVYYLGNSTPTEKGGNTTNLPTNTTSNVRSANNALAQNAPFAQPSATPNLVAINQHDFGTIESVFELANRSKDIDTLYANSGAQGRDLLQTLLIDSHDAGYARQMIDNTSTGEITKQLNAATTTLNNIASLEHKTSSLQTLSLSNAMILNSRLVNLSRRHTNNIDSFAQRLQALKDQKFASLESAAEVLYQFAPKYEKPTNVWANAIGGTSLNNGGNASLYGTSAGVDAYLNGEVEAIVGGFGSYGYSSFNNQANSLNSGANNTNFGVYSRIFANQHEFDFEAQGALGSDQSSLNFKSALLRDLNQSYNYLAYSAATRASYGYDFAFFRNALVLKPSVGVSYNHLGSTNFKSNSNQVALKNGSSSQHLFNASANVEARYYYGDTSYFYMNAGVLQEFANFGSSNAVSLNTFKVNAAHNPLSTHARVMMGGELKLAKEVFLNLGFVYLHNLISNIGHFASNLGMRYSF.

The N-terminal stretch at 1 to 33 (MEIQQTHRKINRPLVSLALVGALVSITPQQSHA) is a signal peptide. A disordered region spans residues 326-374 (PPEGGYKDKPKDKPSNTTQNNANNNQQNSAQNNSNTQVINPPNSAQKTE). Over residues 330 to 339 (GYKDKPKDKP) the composition is skewed to basic and acidic residues. The segment covering 340-362 (SNTTQNNANNNQQNSAQNNSNTQ) has biased composition (low complexity). Residues 363–374 (VINPPNSAQKTE) are compositionally biased toward polar residues. The Autotransporter domain maps to 1018 to 1290 (KYEKPTNVWA…ASNLGMRYSF (273 aa)).

It localises to the periplasm. Its subcellular location is the secreted. It is found in the cell surface. The protein localises to the cell outer membrane. Induces vacuolation of eukaryotic cells. Causes ulceration and gastric lesions. This chain is Vacuolating cytotoxin autotransporter (vacA), found in Helicobacter pylori (strain ATCC 700392 / 26695) (Campylobacter pylori).